Consider the following 162-residue polypeptide: MEIRKRYFLSKKDVKKIKKELEVFFENVDEIIPKKGNVEIAITDDFEIILVDKEPIAFKKDDKVIPTLKLLLKSLPDKNLVVVDIGAIKFLINGADVMAPGIVDADENIKEEDVVFVVDENHKKPICVGIALMNGKEMKEADKGKAIKNLHYVGDKIWNFKG.

In terms of domain architecture, PUA spans 78–154 (KNLVVVDIGA…KAIKNLHYVG (77 aa)).

This is an uncharacterized protein from Methanocaldococcus jannaschii (strain ATCC 43067 / DSM 2661 / JAL-1 / JCM 10045 / NBRC 100440) (Methanococcus jannaschii).